We begin with the raw amino-acid sequence, 80 residues long: Sulfur carrier protein TusA (80 aa).

The Cysteine persulfide intermediate role is filled by C17.

Belongs to the sulfur carrier protein TusA family.

It localises to the cytoplasm. Its function is as follows. Sulfur carrier protein which probably makes part of a sulfur-relay system. This chain is Sulfur carrier protein TusA, found in Pseudomonas putida (strain ATCC 47054 / DSM 6125 / CFBP 8728 / NCIMB 11950 / KT2440).